A 306-amino-acid polypeptide reads, in one-letter code: Mitochondrial substrate carrier family protein ucpA (306 aa).

The Mitochondrial intermembrane segment spans residues 1–15; it reads MSVNLNNNKNNKNKV. Solcar repeat units follow at residues 13–103, 112–204, and 211–301; these read NKVA…ISNA, YFFL…CKNL, and DGIY…FKKL. The chain crosses the membrane as a helical span at residues 16 to 36; the sequence is AIGFISGSLASICATTVTNPI. Over 37 to 83 the chain is Mitochondrial matrix; the sequence is ELVKTRLQLQGELQLSQRIYNGVWDAFKQIYKTEGIRGLQSGLIPAY. Residues 84–103 traverse the membrane as a helical segment; it reads FSQATMQGIRLGSFDLISNA. At 104 to 117 the chain is on the mitochondrial intermembrane side; that stretch reads LGAKPNQDYFFLKN. A helical transmembrane segment spans residues 118–138; sequence LLAGATAGAIGAAAGSPFDLV. The Mitochondrial matrix segment spans residues 139–174; that stretch reads KVRMQAANMYKNDPQFVGYSSSFAAFKQIIQKEGFK. The chain crosses the membrane as a helical span at residues 175–195; it reads GLTRGMLTSAQRTAVGSAIQL. The Mitochondrial intermembrane segment spans residues 196–211; it reads STYGSCKNLVLNFVDD. A helical transmembrane segment spans residues 212-232; that stretch reads GIYAYIISSMVAGFIVTFGMN. At 233–276 the chain is on the mitochondrial matrix side; sequence PFDVARTRLYFQGKGNSHGEIYKGLMDCVYKTVKKEGFGAVYKG. The helical transmembrane segment at 277-295 threads the bilayer; it reads FWAHYLRLGPHTILTLVFW. At 296–306 the chain is on the mitochondrial intermembrane side; sequence EQFKKLFSGEL.

The protein belongs to the mitochondrial carrier (TC 2.A.29) family.

The protein resides in the mitochondrion inner membrane. Mitochondrial solute carriers shuttle metabolites, nucleotides, and cofactors through the mitochondrial inner membrane. Transports oxaloacetate and sulfate. The sequence is that of Mitochondrial substrate carrier family protein ucpA (ucpA) from Dictyostelium discoideum (Social amoeba).